We begin with the raw amino-acid sequence, 560 residues long: Serine/threonine-protein kinase TOS3 (560 aa).

One can recognise a Protein kinase domain in the interval 50-344 (FEILATLGNG…LADIKVHPFM (295 aa)). Residues 56-64 (LGNGQYGKV) and Lys79 contribute to the ATP site. The Proton acceptor role is filled by Asp189.

The protein belongs to the protein kinase superfamily. Ser/Thr protein kinase family. In terms of processing, autophosphorylated.

It carries out the reaction L-seryl-[protein] + ATP = O-phospho-L-seryl-[protein] + ADP + H(+). The catalysed reaction is L-threonyl-[protein] + ATP = O-phospho-L-threonyl-[protein] + ADP + H(+). In terms of biological role, one of the three SNF1 protein kinases (with SAK1 and ELM1) which are required for growth on nonfermentable carbon sources and nonpreferred sugars and for response to environmental stress. Activates SNF1 by phosphorylation of its activation-loop 'Thr-210'. Required for the regulation by SNF1 of the transcription of a large set of genes, the modification the activity of metabolic enzymes, and the control of various nutrient-responsive cellular developmental processes. Also phosphorylates GAL83, MIG1 and SIP2. The polypeptide is Serine/threonine-protein kinase TOS3 (TOS3) (Saccharomyces cerevisiae (strain ATCC 204508 / S288c) (Baker's yeast)).